A 508-amino-acid chain; its full sequence is Phytepsin (508 aa).

The signal sequence occupies residues M1 to A27. A propeptide spans E28–R66 (activation peptide). The 422-residue stretch at Y84–A505 folds into the Peptidase A1 domain. Residue D102 is part of the active site. 2 disulfide bridges follow: C115–C121 and C280–C284. D289 is an active-site residue. One can recognise a Saposin B-type domain in the interval V314 to P419. Disulfide bonds link C319-C413, C344-C385, C350-C382, and C427-C464. N399 carries an N-linked (GlcNAc...) asparagine glycan.

The protein belongs to the peptidase A1 family. In terms of assembly, heterodimer of two subunits (29 kDa and 11 kDa) processed from the precursor molecule. A large enzyme (32 kDa and 16 kDa) is an intermediate precursor form. In terms of tissue distribution, embryo and leaf.

It localises to the vacuole. The catalysed reaction is Prefers hydrophobic residues Phe, Val, Ile, Leu, and Ala at P1 and P1', but also cleaves -Phe-|-Asp- and -Asp-|-Asp- bonds in 2S albumin from plant seeds.. Involved in the breakdown of propeptides of storage proteins in protein-storage vacuoles. The chain is Phytepsin from Hordeum vulgare (Barley).